Reading from the N-terminus, the 223-residue chain is Deoxyribose-phosphate aldolase (223 aa).

Asp-89 functions as the Proton donor/acceptor in the catalytic mechanism. Lys-154 acts as the Schiff-base intermediate with acetaldehyde in catalysis. Residue Lys-183 is the Proton donor/acceptor of the active site.

It belongs to the DeoC/FbaB aldolase family. DeoC type 1 subfamily.

The protein resides in the cytoplasm. The catalysed reaction is 2-deoxy-D-ribose 5-phosphate = D-glyceraldehyde 3-phosphate + acetaldehyde. Its pathway is carbohydrate degradation; 2-deoxy-D-ribose 1-phosphate degradation; D-glyceraldehyde 3-phosphate and acetaldehyde from 2-deoxy-alpha-D-ribose 1-phosphate: step 2/2. In terms of biological role, catalyzes a reversible aldol reaction between acetaldehyde and D-glyceraldehyde 3-phosphate to generate 2-deoxy-D-ribose 5-phosphate. This chain is Deoxyribose-phosphate aldolase, found in Thermoanaerobacter pseudethanolicus (strain ATCC 33223 / 39E) (Clostridium thermohydrosulfuricum).